The primary structure comprises 72 residues: Protein CYSTEINE-RICH TRANSMEMBRANE MODULE 9 (72 aa).

A compositionally biased stretch (polar residues) spans 1 to 22; that stretch reads MNPSEQNHLSVEKPSQTSSGPY. The disordered stretch occupies residues 1–46; sequence MNPSEQNHLSVEKPSQTSSGPYTSPPPIGYPTRDAMVGDPPAAAVE. Residues 49–65 traverse the membrane as a helical segment; it reads SKGDGFWKGCCAAICCC.

This sequence belongs to the CYSTM1 family. As to quaternary structure, heterodimers. Interacts with WIH1/CYSTM13. In terms of tissue distribution, mostly expressed in roots and flowers and, to a lower extent, in stems, siliques and leaves.

Its subcellular location is the cell membrane. The protein localises to the nucleus. In terms of biological role, involved in resistance to abiotic stress. In Arabidopsis thaliana (Mouse-ear cress), this protein is Protein CYSTEINE-RICH TRANSMEMBRANE MODULE 9.